Consider the following 930-residue polypeptide: Isoleucine--tRNA ligase (930 aa).

The short motif at 57–67 (PYANGNIHVGH) is the 'HIGH' region element. E554 contacts L-isoleucyl-5'-AMP. The 'KMSKS' region motif lies at 595–599 (KMSKS). K598 contacts ATP. Residues C888, C891, C908, and C911 each coordinate Zn(2+).

The protein belongs to the class-I aminoacyl-tRNA synthetase family. IleS type 1 subfamily. In terms of assembly, monomer. Requires Zn(2+) as cofactor.

It is found in the cytoplasm. The enzyme catalyses tRNA(Ile) + L-isoleucine + ATP = L-isoleucyl-tRNA(Ile) + AMP + diphosphate. In terms of biological role, catalyzes the attachment of isoleucine to tRNA(Ile). As IleRS can inadvertently accommodate and process structurally similar amino acids such as valine, to avoid such errors it has two additional distinct tRNA(Ile)-dependent editing activities. One activity is designated as 'pretransfer' editing and involves the hydrolysis of activated Val-AMP. The other activity is designated 'posttransfer' editing and involves deacylation of mischarged Val-tRNA(Ile). This Streptococcus pneumoniae (strain ATCC 700669 / Spain 23F-1) protein is Isoleucine--tRNA ligase.